We begin with the raw amino-acid sequence, 422 residues long: Histidine--tRNA ligase (422 aa).

This sequence belongs to the class-II aminoacyl-tRNA synthetase family. As to quaternary structure, homodimer.

The protein resides in the cytoplasm. It catalyses the reaction tRNA(His) + L-histidine + ATP = L-histidyl-tRNA(His) + AMP + diphosphate + H(+). This chain is Histidine--tRNA ligase, found in Aliivibrio fischeri (strain ATCC 700601 / ES114) (Vibrio fischeri).